Here is a 510-residue protein sequence, read N- to C-terminus: GMP synthase [glutamine-hydrolyzing] (510 aa).

The region spanning 5 to 195 (LVLVIDFGGQ…LFKICGLKED (191 aa)) is the Glutamine amidotransferase type-1 domain. Residue cysteine 82 is the Nucleophile of the active site. Residues histidine 169 and glutamate 171 contribute to the active site. The GMPS ATP-PPase domain maps to 196-385 (WSMSSFAKEK…LGIPHKLVWR (190 aa)). 223–229 (SGGVDSS) provides a ligand contact to ATP.

In terms of assembly, homodimer.

It catalyses the reaction XMP + L-glutamine + ATP + H2O = GMP + L-glutamate + AMP + diphosphate + 2 H(+). It functions in the pathway purine metabolism; GMP biosynthesis; GMP from XMP (L-Gln route): step 1/1. In terms of biological role, catalyzes the synthesis of GMP from XMP. The chain is GMP synthase [glutamine-hydrolyzing] from Clostridium acetobutylicum (strain ATCC 824 / DSM 792 / JCM 1419 / IAM 19013 / LMG 5710 / NBRC 13948 / NRRL B-527 / VKM B-1787 / 2291 / W).